The primary structure comprises 208 residues: ATP-dependent Clp protease proteolytic subunit (208 aa).

Ser105 serves as the catalytic Nucleophile. Residue His130 is part of the active site.

Belongs to the peptidase S14 family. As to quaternary structure, fourteen ClpP subunits assemble into 2 heptameric rings which stack back to back to give a disk-like structure with a central cavity, resembling the structure of eukaryotic proteasomes.

The protein localises to the cytoplasm. The enzyme catalyses Hydrolysis of proteins to small peptides in the presence of ATP and magnesium. alpha-casein is the usual test substrate. In the absence of ATP, only oligopeptides shorter than five residues are hydrolyzed (such as succinyl-Leu-Tyr-|-NHMec, and Leu-Tyr-Leu-|-Tyr-Trp, in which cleavage of the -Tyr-|-Leu- and -Tyr-|-Trp bonds also occurs).. Cleaves peptides in various proteins in a process that requires ATP hydrolysis. Has a chymotrypsin-like activity. Plays a major role in the degradation of misfolded proteins. The polypeptide is ATP-dependent Clp protease proteolytic subunit (Xylella fastidiosa (strain 9a5c)).